The chain runs to 242 residues: 3-oxoacyl-[acyl-carrier-protein] reductase FabG (242 aa).

Residues 10–13 (GSTR), T35, 57–58 (NV), and N84 each bind NADP(+). S136 is a binding site for substrate. Catalysis depends on Y149, which acts as the Proton acceptor. NADP(+) is bound by residues 149 to 153 (YCAAK) and I182.

The protein belongs to the short-chain dehydrogenases/reductases (SDR) family. In terms of assembly, homotetramer.

The enzyme catalyses a (3R)-hydroxyacyl-[ACP] + NADP(+) = a 3-oxoacyl-[ACP] + NADPH + H(+). It participates in lipid metabolism; fatty acid biosynthesis. Functionally, catalyzes the NADPH-dependent reduction of beta-ketoacyl-ACP substrates to beta-hydroxyacyl-ACP products, the first reductive step in the elongation cycle of fatty acid biosynthesis. This chain is 3-oxoacyl-[acyl-carrier-protein] reductase FabG (fabG), found in Haemophilus influenzae (strain ATCC 51907 / DSM 11121 / KW20 / Rd).